The primary structure comprises 1161 residues: MFVVDLSLSGNMRSLTHGKSIHRSSIVVVTHCSHRLSLSPLNRPALFPSHSDRYTVPWRCRPSSWRLWITFVCLLTLHMFGLSSAVKRDGEVPTANLRASLSPDSSKEDAMLLSAIGGIGPTESRLQHIPFRTTRYLPIRSHVLQSTVERIESPEALNEVPTKVERNEFTEKGDKTEQVLTAQADHKSLLEGRSESTSTAPDDDFDFLFEDDTPKKPKSRVNKGTSSDETSPGDRSSGEGSSASDSLLSVVHRTKGNATQANKNQKRITHPKSKAQHQKKVTKKQGIPGSDSLGTSSADFDFDIDSSSNTQADDSQRQSLGDSSALDLFGSDTGDTGDIFGFSNSSSDGGNAAANDGGLFSSSGMGPTGASDETSANPLGSILGGVLNPFAQQQSITPMTDKADEWSKENMKAFEEKMPKKMRDDGSPDSWYKQAVPQESVADLNRMRENRRIAEENRAAAPLSAVYTKATKTVPAINYLGAGYDHVRGNPVGDPSSMGDPGIRPPVLRFTYAQNEDGVSNDLTVLQPLGGYVRQYVACRQSETISELSNLSDYQNELSVDASLQGGDPIGLNSFSASTGYRDFAKEVSKKDTRTYMLKNYCMRYEAGVAQSNHLKWNVTLAFAAGVSQLPDVFDAHNPECACSAEQWRQDQNAEACTKTNVPIWISFIEQFGTHFLVRLFAGGKMTYQVTAKRSEVEKMRNMGIDVKTQLKMQLGGVSGGAGQGTSSKKNQSSSEYQMNVQKETLVIGGRPPGNVSDPAALAAWADTVEELPMPVKFEVQPLYHLLPVEKQEAFKQAVTFYSKAVGLTPQDLSALTGVTRNLPKQLTQATQVAWSGPPPGFAKCPAGQVVILGFAMHLNFKEPGTDNFRIISCPPGREKCDGVGTASSETDEGRIYILCGEEPINEIQQVVAESPAHAGASVLEASCPDETVVVGGFGISVRGGSDGLDSFSIESCTTGQTICTKAPTRGSEKNFLWMMCVDKQYPGLRELVNVAELGSHGNANKRAVNSDGNVDVKCPANSSIVLGYVMEAHTNMQFVRDKFLQCPENASECKMTGKGVDHGMLWLFDRHALFGWIICKTVNEPAMHVATDVGKAKGNGKKKKGKKGKNKTNAPNEVEEGQQLGADSPSQVSVPADADSGPTSKTMSSLKLAPVKLLDL.

A helical transmembrane segment spans residues 67 to 86; sequence LWITFVCLLTLHMFGLSSAV. A disordered region spans residues 154–329; the sequence is PEALNEVPTK…LGDSSALDLF (176 aa). Basic and acidic residues-rich tracts occupy residues 162–177 and 184–194; these read TKVE…DKTE and ADHKSLLEGRS. Over residues 201–211 the composition is skewed to acidic residues; sequence PDDDFDFLFED. Polar residues predominate over residues 222–234; that stretch reads NKGTSSDETSPGD. Residues 238–249 show a composition bias toward low complexity; it reads GEGSSASDSLLS. N-linked (GlcNAc...) asparagine glycosylation occurs at Asn-257. The segment covering 264-283 has biased composition (basic residues); that stretch reads NQKRITHPKSKAQHQKKVTK. Positions 309–322 are enriched in polar residues; the sequence is NTQADDSQRQSLGD. Residue Asn-344 is glycosylated (N-linked (GlcNAc...) asparagine). The tract at residues 353–381 is disordered; sequence AANDGGLFSSSGMGPTGASDETSANPLGS. Positions 361–378 are enriched in polar residues; it reads SSSGMGPTGASDETSANP. Residues 463-817 form the MACPF domain; that stretch reads LSAVYTKATK…LTPQDLSALT (355 aa). Cys-539 and Cys-602 are oxidised to a cystine. N-linked (GlcNAc...) asparagine glycosylation occurs at Asn-550. Residues 554 to 589 traverse the membrane as a beta stranded segment; it reads YQNELSVDASLQGGDPIGLNSFSASTGYRDFAKEVS. Asn-618 is a glycosylation site (N-linked (GlcNAc...) asparagine). Cys-643 and Cys-657 form a disulfide bridge. Residues 694-740 form a beta stranded membrane-spanning segment; the sequence is RSEVEKMRNMGIDVKTQLKMQLGGVSGGAGQGTSSKKNQSSSEYQMN. Residues 716–736 form a disordered region; it reads GGVSGGAGQGTSSKKNQSSSE. A glycan (N-linked (GlcNAc...) asparagine) is linked at Asn-755. Cystine bridges form between Cys-845/Cys-900, Cys-874/Cys-881, Cys-928/Cys-981, Cys-957/Cys-964, Cys-1019/Cys-1080, and Cys-1047/Cys-1054. N-linked (GlcNAc...) asparagine glycosylation is found at Asn-1022, Asn-1050, and Asn-1111. Residues 1094-1149 are disordered; that stretch reads VGKAKGNGKKKKGKKGKNKTNAPNEVEEGQQLGADSPSQVSVPADADSGPTSKTMS. Basic residues predominate over residues 1099-1111; the sequence is GNGKKKKGKKGKN.

It belongs to the MPEG1 family. Homooligomer; forms a homooligomeric pore.

The protein localises to the parasitophorous vacuole membrane. It localises to the cytoplasmic vesicle. The protein resides in the secretory vesicle. It is found in the microneme membrane. Its function is as follows. Pore-forming protein that promotes parasite exit from host cells: mediates formation of a pore in the parasitophorous vacuolar membrane, leading to membrane permeabilization, thereby facilitating parasite egress from host cells. May also form a pore in the host plasma membrane. Preferentially binds inner leaflet lipids, such as phosphatidylethanolamine (PE) or phosphatidylserine (PS). The chain is Perforin-like protein 1 from Toxoplasma gondii (strain ATCC 50861 / VEG).